We begin with the raw amino-acid sequence, 89 residues long: Small ribosomal subunit protein uS15 (89 aa).

This sequence belongs to the universal ribosomal protein uS15 family. In terms of assembly, part of the 30S ribosomal subunit. Forms a bridge to the 50S subunit in the 70S ribosome, contacting the 23S rRNA.

In terms of biological role, one of the primary rRNA binding proteins, it binds directly to 16S rRNA where it helps nucleate assembly of the platform of the 30S subunit by binding and bridging several RNA helices of the 16S rRNA. Functionally, forms an intersubunit bridge (bridge B4) with the 23S rRNA of the 50S subunit in the ribosome. In Corynebacterium kroppenstedtii (strain DSM 44385 / JCM 11950 / CIP 105744 / CCUG 35717), this protein is Small ribosomal subunit protein uS15.